A 677-amino-acid chain; its full sequence is Transcription factor IIIB 90 kDa subunit (677 aa).

A TFIIB-type zinc finger spans residues 2–33; the sequence is TGRVCRGCGGTDIELDAARGDAVCTACGSVLE. Zn(2+) contacts are provided by Cys-6, Cys-9, Cys-25, and Cys-28. A run of 2 repeats spans residues 91–172 and 185–269. 2 disordered regions span residues 340-368 and 385-413; these read KGGL…TEDE and LLGG…SLLD. At Thr-365 the chain carries Phosphothreonine. Residue Ser-450 is modified to Phosphoserine. Disordered regions lie at residues 501–521 and 544–653; these read YKEH…ASTA and RGLS…EDGE. Ser-553 carries the post-translational modification Phosphoserine. Positions 640 to 653 are enriched in acidic residues; it reads EEADEEEPDEEDGE.

The protein belongs to the TFIIB family. As to quaternary structure, TFIIIB comprises at least the TATA-binding protein (TBP) and the B-related factor 1 (BRF1/TFIIIB90). Interacts with BDP1. Interacts with MAF1.

The protein resides in the nucleus. General activator of RNA polymerase which utilizes different TFIIIB complexes at structurally distinct promoters. The isoform 1 is involved in the transcription of tRNA, adenovirus VA1, 7SL and 5S RNA. Isoform 2 is required for transcription of the U6 promoter. This chain is Transcription factor IIIB 90 kDa subunit (BRF1), found in Homo sapiens (Human).